Consider the following 315-residue polypeptide: Probable cell division protein WhiA (315 aa).

The segment at residues S277–Q311 is a DNA-binding region (H-T-H motif).

It belongs to the WhiA family.

Its function is as follows. Involved in cell division and chromosome segregation. In Lacticaseibacillus casei (strain BL23) (Lactobacillus casei), this protein is Probable cell division protein WhiA.